The chain runs to 178 residues: Oligoribonuclease (178 aa).

Positions 7 to 168 (LIWIDLEMTG…DDIRESIAEL (162 aa)) constitute an Exonuclease domain. Tyr-128 is an active-site residue.

It belongs to the oligoribonuclease family.

The protein localises to the cytoplasm. Functionally, 3'-to-5' exoribonuclease specific for small oligoribonucleotides. The sequence is that of Oligoribonuclease from Francisella tularensis subsp. holarctica (strain FTNF002-00 / FTA).